The following is a 340-amino-acid chain: Ferredoxin--NADP reductase (340 aa).

FAD-binding residues include aspartate 33, glutamine 41, tyrosine 46, alanine 86, phenylalanine 120, aspartate 286, and threonine 327.

The protein belongs to the ferredoxin--NADP reductase type 2 family. Homodimer. Requires FAD as cofactor.

It catalyses the reaction 2 reduced [2Fe-2S]-[ferredoxin] + NADP(+) + H(+) = 2 oxidized [2Fe-2S]-[ferredoxin] + NADPH. This is Ferredoxin--NADP reductase from Rickettsia rickettsii (strain Iowa).